We begin with the raw amino-acid sequence, 463 residues long: Lipase 6 (463 aa).

Residues 1 to 16 form the signal peptide; that stretch reads MRDLILFLSLLHTIFA. An intrachain disulfide couples cysteine 112 to cysteine 285. Serine 196 functions as the Charge relay system in the catalytic mechanism. The N-linked (GlcNAc...) asparagine glycan is linked to asparagine 231. Active-site charge relay system residues include aspartate 348 and histidine 381. Cysteine 364 and cysteine 409 are joined by a disulfide. Residue asparagine 422 is glycosylated (N-linked (GlcNAc...) asparagine).

This sequence belongs to the AB hydrolase superfamily. Lipase family. Class Lip subfamily.

It is found in the secreted. It carries out the reaction a triacylglycerol + H2O = a diacylglycerol + a fatty acid + H(+). Its function is as follows. Secreted lipase that is able to hydrolyze both the neutral triacylglycerols and the monopalmitate ester Tween 40, allowing the use of hydrolyzed products as carbon sources. Has broad lipolytic activity, which may be important for colonization and subsequent infection, therefore contributing to the persistence and virulence in human tissue. This chain is Lipase 6, found in Candida albicans (strain SC5314 / ATCC MYA-2876) (Yeast).